Here is a 204-residue protein sequence, read N- to C-terminus: NADH-quinone oxidoreductase subunit C (204 aa).

Belongs to the complex I 30 kDa subunit family. In terms of assembly, NDH-1 is composed of 14 different subunits. Subunits NuoB, C, D, E, F, and G constitute the peripheral sector of the complex.

It is found in the cell inner membrane. It carries out the reaction a quinone + NADH + 5 H(+)(in) = a quinol + NAD(+) + 4 H(+)(out). Its function is as follows. NDH-1 shuttles electrons from NADH, via FMN and iron-sulfur (Fe-S) centers, to quinones in the respiratory chain. The immediate electron acceptor for the enzyme in this species is believed to be ubiquinone. Couples the redox reaction to proton translocation (for every two electrons transferred, four hydrogen ions are translocated across the cytoplasmic membrane), and thus conserves the redox energy in a proton gradient. This Rhodopseudomonas palustris (strain ATCC BAA-98 / CGA009) protein is NADH-quinone oxidoreductase subunit C.